The following is a 212-amino-acid chain: Glutathione S-transferase (212 aa).

The GST N-terminal domain maps to 1-82 (MGMKLHGPAM…YIAHTYADKG (82 aa)). Residues Ser11, 12 to 13 (PA), 40 to 41 (HK), 53 to 54 (QV), and 66 to 67 (ES) contribute to the glutathione site. Positions 89–212 (DPKKMAIMSV…AWSKAIEYKQ (124 aa)) constitute a GST C-terminal domain.

This sequence belongs to the GST superfamily. Phi family.

It carries out the reaction RX + glutathione = an S-substituted glutathione + a halide anion + H(+). Functionally, conjugation of reduced glutathione to a wide number of exogenous and endogenous hydrophobic electrophiles. The chain is Glutathione S-transferase from Hyoscyamus muticus (Egyptian henbane).